The sequence spans 406 residues: 8-amino-7-oxononanoate synthase (406 aa).

Residue Arg21 coordinates substrate. 112-113 contacts pyridoxal 5'-phosphate; the sequence is GY. Residue His137 participates in substrate binding. Residues Ser183, His211, and Thr239 each coordinate pyridoxal 5'-phosphate. An N6-(pyridoxal phosphate)lysine modification is found at Lys242. Thr358 is a substrate binding site.

It belongs to the class-II pyridoxal-phosphate-dependent aminotransferase family. BioF subfamily. Homodimer. The cofactor is pyridoxal 5'-phosphate.

It carries out the reaction 6-carboxyhexanoyl-[ACP] + L-alanine + H(+) = (8S)-8-amino-7-oxononanoate + holo-[ACP] + CO2. It participates in cofactor biosynthesis; biotin biosynthesis. Catalyzes the decarboxylative condensation of pimeloyl-[acyl-carrier protein] and L-alanine to produce 8-amino-7-oxononanoate (AON), [acyl-carrier protein], and carbon dioxide. This chain is 8-amino-7-oxononanoate synthase, found in Burkholderia cenocepacia (strain HI2424).